The chain runs to 216 residues: Probable transaldolase (216 aa).

Residue Lys-83 is the Schiff-base intermediate with substrate of the active site.

This sequence belongs to the transaldolase family. Type 3B subfamily.

The protein resides in the cytoplasm. It carries out the reaction D-sedoheptulose 7-phosphate + D-glyceraldehyde 3-phosphate = D-erythrose 4-phosphate + beta-D-fructose 6-phosphate. Its pathway is carbohydrate degradation; pentose phosphate pathway; D-glyceraldehyde 3-phosphate and beta-D-fructose 6-phosphate from D-ribose 5-phosphate and D-xylulose 5-phosphate (non-oxidative stage): step 2/3. In terms of biological role, transaldolase is important for the balance of metabolites in the pentose-phosphate pathway. This chain is Probable transaldolase, found in Desulforamulus reducens (strain ATCC BAA-1160 / DSM 100696 / MI-1) (Desulfotomaculum reducens).